Here is a 256-residue protein sequence, read N- to C-terminus: Homeobox protein TGIF2LX (256 aa).

The interval 1–45 (MEAAADSPAETRSRVEKDSRRVEKDSRRPKKDSPAKTQSPAQDTS) is disordered. Positions 9-34 (AETRSRVEKDSRRVEKDSRRPKKDSP) are enriched in basic and acidic residues. Residues 35–45 (AKTQSPAQDTS) show a composition bias toward polar residues. Positions 62–125 (EHKKKRKGYL…INARRRILPD (64 aa)) form a DNA-binding region, homeobox; TALE-type. The segment at 136–224 (VGHKTGKDAN…SSSPEPVSTE (89 aa)) is disordered. Polar residues predominate over residues 166–179 (DNVQSLPLRSSPKG). The segment covering 209-224 (VSNITSSSSPEPVSTE) has biased composition (low complexity).

This sequence belongs to the TALE/TGIF homeobox family.

The protein localises to the nucleus. Functionally, may have a transcription role in testis. The sequence is that of Homeobox protein TGIF2LX (TGIF2LX) from Papio hamadryas (Hamadryas baboon).